A 141-amino-acid polypeptide reads, in one-letter code: Hemoglobin subunit alpha (141 aa).

Positions 1–141 (VLSSADKTNI…VSTVLTSKYR (141 aa)) constitute a Globin domain. Ser3 carries the post-translational modification Phosphoserine. Position 7 is an N6-succinyllysine (Lys7). Thr8 bears the Phosphothreonine mark. Residue Lys11 is modified to N6-succinyllysine. At Lys16 the chain carries N6-acetyllysine; alternate. Lys16 is modified (N6-succinyllysine; alternate). At Tyr24 the chain carries Phosphotyrosine. Ser35 bears the Phosphoserine mark. Lys40 bears the N6-succinyllysine mark. Residue Ser49 is modified to Phosphoserine. His58 is an O2 binding site. Residue His87 participates in heme b binding. The residue at position 102 (Ser102) is a Phosphoserine. Thr108 carries the phosphothreonine modification. A phosphoserine mark is found at Ser124 and Ser131. Phosphothreonine occurs at positions 134 and 137. Phosphoserine is present on Ser138.

Belongs to the globin family. As to quaternary structure, heterotetramer of two alpha chains and two beta chains. In terms of tissue distribution, red blood cells.

In terms of biological role, involved in oxygen transport from the lung to the various peripheral tissues. Its function is as follows. Hemopressin acts as an antagonist peptide of the cannabinoid receptor CNR1. Hemopressin-binding efficiently blocks cannabinoid receptor CNR1 and subsequent signaling. This is Hemoglobin subunit alpha (HBA) from Rousettus aegyptiacus (Egyptian fruit bat).